The chain runs to 81 residues: Large ribosomal subunit protein bL31B (81 aa).

The protein belongs to the bacterial ribosomal protein bL31 family. Type B subfamily. Part of the 50S ribosomal subunit.

This is Large ribosomal subunit protein bL31B from Bdellovibrio bacteriovorus (strain ATCC 15356 / DSM 50701 / NCIMB 9529 / HD100).